The following is a 457-amino-acid chain: BAG family molecular chaperone regulator 4 (457 aa).

Over residues 1-20 the composition is skewed to low complexity; the sequence is MSALRRSGYGPSDGPSYGRY. The interval 1–104 is disordered; sequence MSALRRSGYG…PYPGYNSNYW (104 aa). Residue S7 is modified to Phosphoserine. Positions 31 to 48 are enriched in pro residues; sequence HVPPPLYPPLRPEPPQPP. Residues R41, R54, R108, and R185 each carry the omega-N-methylarginine modification. 2 disordered regions span residues 128-335 and 348-374; these read LNSY…SDLL and YGNA…SSDE. The segment covering 160 to 193 has biased composition (polar residues); the sequence is YTQSNYSTEVPNTYRSPGNSPTPMSRWMYSQQDC. Low complexity predominate over residues 255–268; that stretch reads PWPSAAPSAPSAGS. The segment covering 284–295 has biased composition (pro residues); sequence PQPPPSPPPQQP. Composition is skewed to polar residues over residues 326 to 335 and 348 to 365; these read AVNNDNSDLL and YGNA…SNNL. A BAG domain is found at 379–456; sequence SIKKIIHVLE…AILEKLEKKG (78 aa).

Binds to the ATPase domain of HSP/HSC70 chaperones. Binds to the death domain of TNFRSF12. Binds to the death domain of TNFRSF1A in the absence of TNF and thereby prevents binding of adapter molecules such as TRADD or TRAF2. Interacts with PRKN.

It localises to the cytoplasm. Functionally, inhibits the chaperone activity of HSP70/HSC70 by promoting substrate release. Prevents constitutive TNFRSF1A signaling. Negative regulator of PRKN translocation to damaged mitochondria. This Mus musculus (Mouse) protein is BAG family molecular chaperone regulator 4 (Bag4).